The primary structure comprises 88 residues: Protein MATERNALLY EXPRESSED GENE 2 (88 aa).

Residues 1 to 27 form the signal peptide; the sequence is MEYRKRVDALVFFSLLLLGYFAAHAHG. Cys-65 and Cys-87 are disulfide-bonded.

This sequence belongs to the MEG family. Expressed exclusively in endosperm.

The sequence is that of Protein MATERNALLY EXPRESSED GENE 2 (MEG2) from Zea mays (Maize).